A 79-amino-acid chain; its full sequence is Ferredoxin oxidoreductase 1 subunit ForD (79 aa).

2 4Fe-4S ferredoxin-type domains span residues 3 to 35 (YVAQ…YTDE) and 37 to 65 (HHAY…RDSI). [4Fe-4S] cluster-binding residues include Cys12, Cys17, Cys20, Cys24, Cys46, Cys49, Cys52, and Cys56.

As to quaternary structure, heterotetramer of one alpha, one beta, one delta and one gamma chain. The cofactor is [4Fe-4S] cluster.

The chain is Ferredoxin oxidoreductase 1 subunit ForD (forD1) from Aquifex aeolicus (strain VF5).